The following is a 394-amino-acid chain: NAD(P)H-quinone oxidoreductase subunit H (394 aa).

Belongs to the complex I 49 kDa subunit family. NDH-1 can be composed of about 15 different subunits; different subcomplexes with different compositions have been identified which probably have different functions.

The protein localises to the cellular thylakoid membrane. The enzyme catalyses a plastoquinone + NADH + (n+1) H(+)(in) = a plastoquinol + NAD(+) + n H(+)(out). It catalyses the reaction a plastoquinone + NADPH + (n+1) H(+)(in) = a plastoquinol + NADP(+) + n H(+)(out). In terms of biological role, NDH-1 shuttles electrons from an unknown electron donor, via FMN and iron-sulfur (Fe-S) centers, to quinones in the respiratory and/or the photosynthetic chain. The immediate electron acceptor for the enzyme in this species is believed to be plastoquinone. Couples the redox reaction to proton translocation, and thus conserves the redox energy in a proton gradient. Cyanobacterial NDH-1 also plays a role in inorganic carbon-concentration. This chain is NAD(P)H-quinone oxidoreductase subunit H, found in Synechococcus sp. (strain CC9605).